The sequence spans 709 residues: Polyribonucleotide nucleotidyltransferase (709 aa).

Residues Asp-485 and Asp-491 each contribute to the Mg(2+) site. Positions 552 to 611 (PRIYTMKIDPKKIKDVIGKGGATIRSLTEETGTSIDIDDDGTVKIAAVDSNAAKNVMGRI) constitute a KH domain. Positions 621–689 (GAIYKGKVTR…RQGRIRLTMK (69 aa)) constitute an S1 motif domain.

The protein belongs to the polyribonucleotide nucleotidyltransferase family. As to quaternary structure, component of the RNA degradosome, which is a multiprotein complex involved in RNA processing and mRNA degradation. It depends on Mg(2+) as a cofactor.

It localises to the cytoplasm. It carries out the reaction RNA(n+1) + phosphate = RNA(n) + a ribonucleoside 5'-diphosphate. Functionally, involved in mRNA degradation. Catalyzes the phosphorolysis of single-stranded polyribonucleotides processively in the 3'- to 5'-direction. The chain is Polyribonucleotide nucleotidyltransferase from Haemophilus influenzae (strain PittEE).